The following is a 215-amino-acid chain: MNIEFSNIEARVIGCLMEKELTTPDLYPLTLNSLTNACNQKSNRDPVMLLSEAEVLDAVDALIEKRLINDESGFHGRVTKYRHRFCNTEFGNFQFTGQEKGIICCMLLRGAQTPGELRTRSHRLCQFIDVKEVENVLDKLVQDSLVVKLPREAGKRDSRYMHQFSGEVDLAEVPLTVAPVSEVVQGDDRIEQLEKDLSALKNEVSELRYLIEQRL.

This sequence belongs to the UPF0502 family.

The sequence is that of UPF0502 protein Ping_1905 from Psychromonas ingrahamii (strain DSM 17664 / CCUG 51855 / 37).